The primary structure comprises 166 residues: MMAFLLDIITFLQISFSTNIFRINYKWVSDGYDEYKKRLSKLIPLELIELPIAKRTKTGNPKLWMEQEAKTILGKLNDSDHLVILDVNSKIISTEELADKMQNWKFNNPNVVILIGGPDGIDQSIKDIAKEKISISKMTFPHPLVRIIAEQLYRAYTILEGHPYHK.

S-adenosyl-L-methionine is bound by residues L85, G116, and I135–F140.

Belongs to the RNA methyltransferase RlmH family. In terms of assembly, homodimer.

It is found in the cytoplasm. It carries out the reaction pseudouridine(1915) in 23S rRNA + S-adenosyl-L-methionine = N(3)-methylpseudouridine(1915) in 23S rRNA + S-adenosyl-L-homocysteine + H(+). Functionally, specifically methylates the pseudouridine at position 1915 (m3Psi1915) in 23S rRNA. The protein is Ribosomal RNA large subunit methyltransferase H of Francisella tularensis subsp. holarctica (strain FTNF002-00 / FTA).